Reading from the N-terminus, the 253-residue chain is MAISIKSPKEIKALRKAGELTAQALALLEREVRPGVSLLELDKMAEDFIKSSHARPAFKGLYGFPNSVCMSLNEVVIHGIPTDYVLQEGDIIGLDLGVEVDGYYGDSALTLPIGAISPQDEKLLACSKESLMHAINSIRVGMHFKELSQILESTITERGFVPLKGFCGHGIGKKPHEEPEIPNYLEKGVKPNSGPKIKEGMVFCLEPMVCQKQGEPKILADKWSVVSVDGLNTSHHEHTIAIVGNKAVILTER.

His-78 lines the substrate pocket. A divalent metal cation contacts are provided by Asp-95, Asp-106, and His-169. Residue His-176 coordinates substrate. A divalent metal cation is bound by residues Glu-206 and Glu-237.

The protein belongs to the peptidase M24A family. Methionine aminopeptidase type 1 subfamily. In terms of assembly, monomer. Co(2+) serves as cofactor. Requires Zn(2+) as cofactor. The cofactor is Mn(2+). It depends on Fe(2+) as a cofactor.

It catalyses the reaction Release of N-terminal amino acids, preferentially methionine, from peptides and arylamides.. Removes the N-terminal methionine from nascent proteins. The N-terminal methionine is often cleaved when the second residue in the primary sequence is small and uncharged (Met-Ala-, Cys, Gly, Pro, Ser, Thr, or Val). Requires deformylation of the N(alpha)-formylated initiator methionine before it can be hydrolyzed. This chain is Methionine aminopeptidase, found in Helicobacter pylori (strain ATCC 700392 / 26695) (Campylobacter pylori).